A 129-amino-acid polypeptide reads, in one-letter code: uncharacterized protein (129 aa).

3 helical membrane-spanning segments follow: residues 22–42, 55–75, and 88–108; these read LASS…FFFF, VGSF…FFFF, and LPFT…FFFF.

The protein resides in the membrane. This is an uncharacterized protein from Saccharomyces cerevisiae (strain ATCC 204508 / S288c) (Baker's yeast).